The chain runs to 358 residues: tRNA-specific 2-thiouridylase MnmA (358 aa).

ATP-binding positions include 6–13 (LVSGGVDS) and isoleucine 32. Residues 93–95 (NPD) are interaction with target base in tRNA. The Nucleophile role is filled by cysteine 98. Cysteine 98 and cysteine 193 form a disulfide bridge. An ATP-binding site is contributed by glycine 121. An interaction with tRNA region spans residues 143–145 (KDQ). The active-site Cysteine persulfide intermediate is the cysteine 193.

It belongs to the MnmA/TRMU family.

It is found in the cytoplasm. The enzyme catalyses S-sulfanyl-L-cysteinyl-[protein] + uridine(34) in tRNA + AH2 + ATP = 2-thiouridine(34) in tRNA + L-cysteinyl-[protein] + A + AMP + diphosphate + H(+). Catalyzes the 2-thiolation of uridine at the wobble position (U34) of tRNA, leading to the formation of s(2)U34. The protein is tRNA-specific 2-thiouridylase MnmA of Parabacteroides distasonis (strain ATCC 8503 / DSM 20701 / CIP 104284 / JCM 5825 / NCTC 11152).